We begin with the raw amino-acid sequence, 95 residues long: Small ribosomal subunit protein uS19 (95 aa).

It belongs to the universal ribosomal protein uS19 family.

Functionally, protein S19 forms a complex with S13 that binds strongly to the 16S ribosomal RNA. The polypeptide is Small ribosomal subunit protein uS19 (Bdellovibrio bacteriovorus (strain ATCC 15356 / DSM 50701 / NCIMB 9529 / HD100)).